Reading from the N-terminus, the 436-residue chain is bZIP transcription factor RISBZ1 (436 aa).

Residues 1–27 (MEHVFAVDEIPDPLWAPPPPVQPAAAA) are required for transactivation activity. The segment at 182–258 (LSPGPNGGSG…SARRSRSRKA (77 aa)) is disordered. Positions 215–225 (PSEDDDMEGDA) are enriched in acidic residues. Residues 236 to 299 (EDKVKKRKES…SAAAIDNRVL (64 aa)) form the bZIP domain. Residues 238–257 (KVKKRKESNRESARRSRSRK) are basic motif. The interval 264–278 (LEEQVSLLRVENSSL) is leucine-zipper.

As to quaternary structure, homodimer. Forms heterodimers with RISBZ2/BZP33 and RISBZ3/BZP20. Interacts with DOF3/RPBF. As to expression, specifically expressed in seeds. Expressed in aleurone and subaleurone layers of maturing seeds, but not in the embryo tissues.

Its subcellular location is the nucleus. In terms of biological role, transcriptional activator that binds to the DNA specific sequence 5'-TGAGTCA-3' found in seed storage protein gene promoters. Involved in the endosperm-specific regulation of storage protein genes. Can activate the expression of genes encoding for the seed storage proteins glutelin, prolamin, globulin and the allergen RAG1. Functions synergistically with DOF3/RPBF to positively regulate quantitatively many seed storage protein genes. Functions synergistically with DOF3/RPBF to positively regulate some metabolic enzymes, such as alanine aminotransferase and pyruvate phosphate dikinase, that are expressed in developing seeds. Functions synergistically with DOF3/RPBF to positively regulate genes that are key players in the development of aleurone layers. Functions synergistically with DOF3/RPBF to positively regulate the glutelin GLUD-1 gene in endosperm of developing seeds. Can activate the expression of the bifunctional lysine-degrading enzyme, lysine ketoglutarate reductase/saccharopine dehydrogenase (LKR/SDH), one of the key regulators determining free lysine content in plants. Functions as a key regulator of starch synthesis in seeds, by direct binding to the promoters of starch-synthesizing genes, such as AGPL3, WAXXY and SBE1. The chain is bZIP transcription factor RISBZ1 from Oryza sativa subsp. japonica (Rice).